The sequence spans 406 residues: uncharacterized protein (406 aa).

Residues 136–153 (SQKNWGSEKNWNSPSQGP) show a composition bias toward polar residues. A disordered region spans residues 136-157 (SQKNWGSEKNWNSPSQGPASRE).

This is an uncharacterized protein from Rattus norvegicus (Rat).